Here is a 628-residue protein sequence, read N- to C-terminus: Very-long-chain aldehyde decarbonylase GL1-2 (628 aa).

Transmembrane regions (helical) follow at residues 37–57 (GAAP…ARGL), 131–151 (GWAI…YWAH), 191–211 (VVIG…VGLV), 299–319 (DFVF…PFVL), and 331–351 (FVLL…WCCS). Residues 137–277 (LLHVLVAEPL…MPIFDLLGGT (141 aa)) form the Fatty acid hydroxylase domain.

This sequence belongs to the sterol desaturase family. As to quaternary structure, homodimer. In terms of tissue distribution, expressed in germinating seeds, radicals and leaves.

It localises to the endoplasmic reticulum membrane. It carries out the reaction a long-chain fatty aldehyde + 2 NADPH + O2 + H(+) = a long-chain alkane + formate + 2 NADP(+) + H2O. In terms of biological role, aldehyde decarbonylase involved in the conversion of aldehydes to alkanes. Core component of a very-long-chain alkane synthesis complex. Required for the formation of wax layers conferring cuticular permeability and drought tolerance. In Oryza sativa subsp. japonica (Rice), this protein is Very-long-chain aldehyde decarbonylase GL1-2.